The sequence spans 921 residues: cGMP-dependent 3',5'-cyclic phosphodiesterase (921 aa).

Residue methionine 1 is modified to N-acetylmethionine. Disordered regions lie at residues 1–21 and 177–198; these read MRRQ…PPGS and ESSV…DQKG. Over residues 177-188 the composition is skewed to polar residues; the sequence is ESSVAPEATQNP. GAF domains are found at residues 220–357 and 389–528; these read DASS…STVL and DVSV…GISI. 5 residues coordinate 3',5'-cyclic GMP: serine 411, aspartate 426, isoleucine 445, tyrosine 468, and threonine 479. In terms of domain architecture, PDEase spans 558 to 882; sequence SDDEYTKLLH…EHWTKVSHKF (325 aa). The active-site Proton donor is histidine 636. Positions 640, 676, 677, and 788 each coordinate Zn(2+). Mg(2+) is bound at residue aspartate 677.

The protein belongs to the cyclic nucleotide phosphodiesterase family. PDE2 subfamily. Homodimer. Requires Zn(2+) as cofactor. The cofactor is Mg(2+).

The protein resides in the cell membrane. Its subcellular location is the cytoplasm. It localises to the mitochondrion. The protein localises to the mitochondrion inner membrane. It is found in the mitochondrion outer membrane. The catalysed reaction is a nucleoside 3',5'-cyclic phosphate + H2O = a nucleoside 5'-phosphate + H(+). It carries out the reaction 3',5'-cyclic GMP + H2O = GMP + H(+). It catalyses the reaction 3',5'-cyclic AMP + H2O = AMP + H(+). Its activity is regulated as follows. The 3',5'-cyclic-AMP phosphodiesterase activity is stimulated by 3',5'-cyclic GMP. Its function is as follows. cGMP-activated cyclic nucleotide phosphodiesterase with a dual-specificity for the second messengers cAMP and cGMP, which are key regulators of many important physiological processes. Has a higher efficiency with cGMP compared to cAMP. Plays a role in cell growth and migration. In terms of biological role, regulates mitochondrial cAMP levels and respiration. Involved in the regulation of mitochondria morphology/dynamics and apoptotic cell death via local modulation of cAMP/PKA signaling in the mitochondrion, including the monitoring of local cAMP levels at the outer mitochondrial membrane and of PKA-dependent phosphorylation of DNM1L. The chain is cGMP-dependent 3',5'-cyclic phosphodiesterase from Bos taurus (Bovine).